The sequence spans 359 residues: Nicotinate-nucleotide--dimethylbenzimidazole phosphoribosyltransferase (359 aa).

E318 acts as the Proton acceptor in catalysis.

It belongs to the CobT family. Homodimer.

The catalysed reaction is 5,6-dimethylbenzimidazole + nicotinate beta-D-ribonucleotide = alpha-ribazole 5'-phosphate + nicotinate + H(+). It functions in the pathway nucleoside biosynthesis; alpha-ribazole biosynthesis; alpha-ribazole from 5,6-dimethylbenzimidazole: step 1/2. Catalyzes the synthesis of alpha-ribazole-5'-phosphate from nicotinate mononucleotide (NAMN) and 5,6-dimethylbenzimidazole (DMB). The polypeptide is Nicotinate-nucleotide--dimethylbenzimidazole phosphoribosyltransferase (Escherichia coli O8 (strain IAI1)).